The following is a 172-amino-acid chain: Adenine phosphoribosyltransferase (172 aa).

This sequence belongs to the purine/pyrimidine phosphoribosyltransferase family. As to quaternary structure, homodimer.

The protein resides in the cytoplasm. The enzyme catalyses AMP + diphosphate = 5-phospho-alpha-D-ribose 1-diphosphate + adenine. Its pathway is purine metabolism; AMP biosynthesis via salvage pathway; AMP from adenine: step 1/1. Its function is as follows. Catalyzes a salvage reaction resulting in the formation of AMP, that is energically less costly than de novo synthesis. In Methanococcus maripaludis (strain C5 / ATCC BAA-1333), this protein is Adenine phosphoribosyltransferase.